Consider the following 314-residue polypeptide: Ribosomal RNA small subunit methyltransferase H (314 aa).

S-adenosyl-L-methionine contacts are provided by residues 36–38 (GGH), Asp56, Phe82, Asp104, and Gln111.

This sequence belongs to the methyltransferase superfamily. RsmH family.

The protein localises to the cytoplasm. The catalysed reaction is cytidine(1402) in 16S rRNA + S-adenosyl-L-methionine = N(4)-methylcytidine(1402) in 16S rRNA + S-adenosyl-L-homocysteine + H(+). Functionally, specifically methylates the N4 position of cytidine in position 1402 (C1402) of 16S rRNA. The polypeptide is Ribosomal RNA small subunit methyltransferase H (Ectopseudomonas mendocina (strain ymp) (Pseudomonas mendocina)).